The sequence spans 284 residues: Gigasin-3a (284 aa).

The interval 202–284 is disordered; it reads GLDNPLPNPR…FKAGRKNNRN (83 aa). The span at 223–245 shows a compositional bias: low complexity; that stretch reads SSPLPESTPKSSTKTSSASPIKS. Positions 246–257 are enriched in basic residues; sequence RQGKKLRGKKQN. Residues 258–267 show a composition bias toward polar residues; sequence KTGNTRFTYR. The span at 268–284 shows a compositional bias: basic residues; sequence NNKRNIKFKAGRKNNRN.

As to expression, component of the organic matrix of calcified shell layers.

The sequence is that of Gigasin-3a from Magallana gigas (Pacific oyster).